A 283-amino-acid chain; its full sequence is MKIISDIQELRDHLRGQNRASFVPTMGNLHEGHLSLMRLARQHGDPVVASIFVNRLQFGPNEDFDSYPRTMQADIDKLEKEGVYILFAPTERDLYPQPQEYRVDPPQQLGDILEGEFRPGFFKGVCTVVLKLFSCVQPKVAVFGKKDYQQLMIIHQMAKQFALPVEIIPGETIRAEDGLALSSRNGYLSAEERAEAPELIKALKEVRQRVLDSNIRDAKTISEIEKLAVASLAGRGWKLDYIAIRQQSNLAPASNEQLQAGDPLVILTAAKLGKTRLIDNLEI.

26–33 lines the ATP pocket; the sequence is MGNLHEGH. H33 (proton donor) is an active-site residue. Q57 contacts (R)-pantoate. Q57 contacts beta-alanine. 144–147 is an ATP binding site; the sequence is GKKD. Q150 provides a ligand contact to (R)-pantoate. ATP is bound by residues I173 and 181 to 184; that span reads LSSR.

The protein belongs to the pantothenate synthetase family. Homodimer.

It is found in the cytoplasm. The catalysed reaction is (R)-pantoate + beta-alanine + ATP = (R)-pantothenate + AMP + diphosphate + H(+). Its pathway is cofactor biosynthesis; (R)-pantothenate biosynthesis; (R)-pantothenate from (R)-pantoate and beta-alanine: step 1/1. Functionally, catalyzes the condensation of pantoate with beta-alanine in an ATP-dependent reaction via a pantoyl-adenylate intermediate. In Polynucleobacter necessarius subsp. necessarius (strain STIR1), this protein is Pantothenate synthetase.